A 289-amino-acid chain; its full sequence is MTAQVTCVWDLKATLGEGPIWHGDTLWFVDIKQRKIHNYHPATGERFSFDAPDQVTFLAPIVGATGFVVGLKTGIHRFHPATGFSLLLEVEDAALNNRPNDATVDAQGRLWFGTMHDGEENNSGSLYRMDLTGVARMDRDICITNGPCVSPDGKTFYHTDTLEKTIYAFDLAEDGLLSNKRVFVQFALGDDVYPDGSVVDSEGYLWTALWGGFGAVRFSPQGDAVTRIELPAPNVTKPCFGGPDLKTLYFTTARKGLSDETLAQYPLAGGVFAVPVDVAGQPQHEVRLV.

Residue Glu17 coordinates Fe(2+). Residues Arg98, Asn100, Glu119, and Asn145 each contribute to the D-xylono-1,5-lactone site. Asn145 and Asp195 together coordinate Fe(2+). Asp195 functions as the Proton donor/acceptor in the catalytic mechanism.

The protein belongs to the SMP-30/CGR1 family. Fe(2+) is required as a cofactor.

It carries out the reaction D-xylono-1,5-lactone + H2O = D-xylonate + H(+). In terms of biological role, involved in the degradation of D-xylose. Catalyzes the hydrolysis of D-xylonolactone to D-xylonate. This Caulobacter vibrioides (strain ATCC 19089 / CIP 103742 / CB 15) (Caulobacter crescentus) protein is D-xylonolactone lactonase.